We begin with the raw amino-acid sequence, 175 residues long: Peptide deformylase (175 aa).

2 residues coordinate Fe cation: Cys-99 and His-141. Glu-142 is an active-site residue. His-145 is a Fe cation binding site.

Belongs to the polypeptide deformylase family. Fe(2+) is required as a cofactor.

It catalyses the reaction N-terminal N-formyl-L-methionyl-[peptide] + H2O = N-terminal L-methionyl-[peptide] + formate. Removes the formyl group from the N-terminal Met of newly synthesized proteins. Requires at least a dipeptide for an efficient rate of reaction. N-terminal L-methionine is a prerequisite for activity but the enzyme has broad specificity at other positions. This chain is Peptide deformylase, found in Rickettsia akari (strain Hartford).